A 310-amino-acid polypeptide reads, in one-letter code: p-hydroxybenzoic acid efflux pump subunit AaeA (310 aa).

A helical membrane pass occupies residues 12-32 (AITLVLVILAFIAIFRAWVYY).

This sequence belongs to the membrane fusion protein (MFP) (TC 8.A.1) family.

It is found in the cell inner membrane. In terms of biological role, forms an efflux pump with AaeB. This Salmonella schwarzengrund (strain CVM19633) protein is p-hydroxybenzoic acid efflux pump subunit AaeA.